The primary structure comprises 326 residues: tRNA-modifying protein YgfZ (326 aa).

Folate-binding residues include tryptophan 27 and tryptophan 189.

Belongs to the tRNA-modifying YgfZ family.

Its subcellular location is the cytoplasm. Functionally, folate-binding protein involved in regulating the level of ATP-DnaA and in the modification of some tRNAs. It is probably a key factor in regulatory networks that act via tRNA modification, such as initiation of chromosomal replication. The sequence is that of tRNA-modifying protein YgfZ from Shigella dysenteriae serotype 1 (strain Sd197).